The chain runs to 380 residues: L-prolyl-[peptidyl-carrier protein] dehydrogenase (380 aa).

The Proton acceptor role is filled by Glu243. FAD-binding residues include Arg269 and Gln280.

This sequence belongs to the acyl-CoA dehydrogenase family. FAD serves as cofactor.

It carries out the reaction L-prolyl-[peptidyl-carrier protein] + 2 oxidized [electron-transfer flavoprotein] + H(+) = (1H-pyrrole-2-carbonyl)-[peptidyl-carrier protein] + 2 reduced [electron-transfer flavoprotein]. Functionally, involved in the biosynthesis of pyoluteorin. Catalyzes the desaturation of the L-prolyl-[PltL] to yield 1H-pyrrole-2-carbonyl-[PltL]. The sequence is that of L-prolyl-[peptidyl-carrier protein] dehydrogenase from Pseudomonas fluorescens (strain ATCC BAA-477 / NRRL B-23932 / Pf-5).